Consider the following 650-residue polypeptide: Aminopeptidase B (650 aa).

S7 carries the post-translational modification Phosphoserine. 298–302 (GGMEN) is a substrate binding site. H325 contributes to the Zn(2+) binding site. E326 serves as the catalytic Proton acceptor. Positions 329 and 348 each coordinate Zn(2+). The residue at position 446 (K446) is an N6-acetyllysine.

Belongs to the peptidase M1 family. Monomer. The cofactor is Zn(2+). Widely expressed.

It localises to the secreted. The enzyme catalyses Release of N-terminal Arg and Lys from oligopeptides when P1' is not Pro. Also acts on arylamides of Arg and Lys.. In terms of biological role, exopeptidase which selectively removes arginine and/or lysine residues from the N-terminus of several peptide substrates including Arg(0)-Leu-enkephalin, Arg(0)-Met-enkephalin and Arg(-1)-Lys(0)-somatostatin-14. Can hydrolyze leukotriene A4 (LTA-4) into leukotriene B4 (LTB-4). The chain is Aminopeptidase B (Rnpep) from Rattus norvegicus (Rat).